Here is a 298-residue protein sequence, read N- to C-terminus: ADP/ATP translocase 1 (298 aa).

At 1–7 the chain is on the mitochondrial intermembrane side; that stretch reads MGDHAWS. Glycine 2 carries the N-acetylglycine modification. One copy of the Solcar 1 repeat lies at 6–98; the sequence is WSFLKDFLAG…FAFKDKYKQL (93 aa). Serine 7 is modified (phosphoserine). A helical transmembrane segment spans residues 8–37; sequence FLKDFLAGGVAAAVSKTAVAPIERVKLLLQ. Residues 38–74 are Mitochondrial matrix-facing; it reads VQHASKQISAEKQYKGIIDCVVRIPKEQGFLSFWRGN. Lysine 52 is modified (N6,N6,N6-trimethyllysine). Residues 75–99 form a helical membrane-spanning segment; that stretch reads LANVIRYFPTQALNFAFKDKYKQLF. The ADP site is built by arginine 80 and lysine 92. Over 100–109 the chain is Mitochondrial intermembrane; the sequence is LGGVDRHKQF. The helical transmembrane segment at 110–130 threads the bilayer; the sequence is WRYFAGNLASGGAAGATSLCF. 2 Solcar repeats span residues 111–201 and 212–297; these read RYFA…AKGM and VSWM…IKKY. The Mitochondrial matrix segment spans residues 131-178; the sequence is VYPLDFARTRLAADVGKGAAQREFHGLGDCIIKIFKSDGLRGLYQGFN. Lysine 147 is subject to N6-succinyllysine. Cysteine 160 carries the S-nitrosocysteine modification. The chain crosses the membrane as a helical span at residues 179 to 199; it reads VSVQGIIIYRAAYFGVYDTAK. At 200-210 the chain is on the mitochondrial intermembrane side; the sequence is GMLPDPKNVHI. Residues 211 to 231 traverse the membrane as a helical segment; it reads FVSWMIAQSVTAVAGLVSYPF. Topologically, residues 232 to 273 are mitochondrial matrix; sequence DTVRRRMMMQSGRKGADIMYTGTVDCWRKIAKDEGAKAFFKG. Arginine 235 serves as a coordination point for ADP. An important for transport activity region spans residues 235–240; the sequence is RRRMMM. The Nucleotide carrier signature motif motif lies at 235 to 240; it reads RRRMMM. N6-succinyllysine is present on residues lysine 245 and lysine 272. The helical transmembrane segment at 274-291 threads the bilayer; it reads AWSNVLRGMGGAFVLVLY. At 292-298 the chain is on the mitochondrial intermembrane side; the sequence is DEIKKYV.

It belongs to the mitochondrial carrier (TC 2.A.29) family. Monomer. Found in a complex with ARL2, ARL2BP and SLC25A4/ANT1. Interacts with ARL2BP. Interacts with ARHGAP11B, thereby inhibiting the mitochondrial permeability transition pore (mPTP). Interacts with TIMM44; leading to inhibit the presequence translocase TIMM23, thereby promoting stabilization of PINK1. In terms of assembly, (Microbial infection) Interacts with HIV-1 Vpr. Under cell death induction, transglutaminated by TGM2. Transglutamination leads to formation of covalent cross-links between a glutamine and the epsilon-amino group of a lysine residue, forming polymers. In terms of tissue distribution, expressed in erythrocytes (at protein level).

The protein localises to the mitochondrion inner membrane. Its subcellular location is the membrane. It carries out the reaction ADP(in) + ATP(out) = ADP(out) + ATP(in). It catalyses the reaction H(+)(in) = H(+)(out). The matrix-open state (m-state) is inhibited by the membrane-permeable bongkrekic acid (BKA). The cytoplasmic-open state (c-state) is inhibited by the membrane-impermeable toxic inhibitor carboxyatractyloside (CATR). Proton transporter activity is inhibited by ADP:ATP antiporter activity. ADP:ATP antiporter that mediates import of ADP into the mitochondrial matrix for ATP synthesis, and export of ATP out to fuel the cell. Cycles between the cytoplasmic-open state (c-state) and the matrix-open state (m-state): operates by the alternating access mechanism with a single substrate-binding site intermittently exposed to either the cytosolic (c-state) or matrix (m-state) side of the inner mitochondrial membrane. In addition to its ADP:ATP antiporter activity, also involved in mitochondrial uncoupling and mitochondrial permeability transition pore (mPTP) activity. Plays a role in mitochondrial uncoupling by acting as a proton transporter: proton transport uncouples the proton flows via the electron transport chain and ATP synthase to reduce the efficiency of ATP production and cause mitochondrial thermogenesis. Proton transporter activity is inhibited by ADP:ATP antiporter activity, suggesting that SLC25A4/ANT1 acts as a master regulator of mitochondrial energy output by maintaining a delicate balance between ATP production (ADP:ATP antiporter activity) and thermogenesis (proton transporter activity). Proton transporter activity requires free fatty acids as cofactor, but does not transport it. Also plays a key role in mPTP opening, a non-specific pore that enables free passage of the mitochondrial membranes to solutes of up to 1.5 kDa, and which contributes to cell death. It is however unclear if SLC25A4/ANT1 constitutes a pore-forming component of mPTP or regulates it. Acts as a regulator of mitophagy independently of ADP:ATP antiporter activity: promotes mitophagy via interaction with TIMM44, leading to inhibit the presequence translocase TIMM23, thereby promoting stabilization of PINK1. The sequence is that of ADP/ATP translocase 1 from Homo sapiens (Human).